We begin with the raw amino-acid sequence, 373 residues long: MVDLNGISPKNKGYYVALGLEGSANKLGVGVIKQFVDGSPTEIVSNIRDTYITPPGEGFLPRDTARHHKNWCVRLVKRALAEAGVTPGQLDAICFTKGPGMGAPLHSVVIVARTVSLLWDVPLVPVNHCIGHIEMGREITGAQNPVVLYVSGGNTQVIAYSNQKYRIFGETLDIAIGNCLDRFARTLKIPNDPSPGYNIEQMALKCKNKERLVELPYTVKGMDLSLSGILAYIDSLAKDLFRKNYSNKLLFDKKTHEQLVTVEDLCYALQETLFSMLVEITERAMAHVNSAHVLIVGGVGCNLRLQEMMEQMCMDRANGHVYATDERFCIDNGVMIAQAGLLQYRMGDYVKDFKETVVTQKFRTDEVLVSWRD.

The a divalent metal cation site is built by H128, H132, and Y149. Substrate-binding positions include 149–153 (YVSGG), D181, G196, E200, and N302. D331 serves as a coordination point for a divalent metal cation.

Belongs to the KAE1 / TsaD family. Component of the EKC/KEOPS complex composed of at least BUD32, CGI121, GON7, KAE1 and PCC1; the whole complex dimerizes. The cofactor is a divalent metal cation.

It localises to the cytoplasm. It is found in the nucleus. It catalyses the reaction L-threonylcarbamoyladenylate + adenosine(37) in tRNA = N(6)-L-threonylcarbamoyladenosine(37) in tRNA + AMP + H(+). Functionally, component of the EKC/KEOPS complex that is required for the formation of a threonylcarbamoyl group on adenosine at position 37 (t(6)A37) in tRNAs that read codons beginning with adenine. The complex is probably involved in the transfer of the threonylcarbamoyl moiety of threonylcarbamoyl-AMP (TC-AMP) to the N6 group of A37. KAE1 likely plays a direct catalytic role in this reaction, but requires other protein(s) of the complex to fulfill this activity. The EKC/KEOPS complex also promotes both telomere uncapping and telomere elongation. The complex is required for efficient recruitment of transcriptional coactivators. This is tRNA N6-adenosine threonylcarbamoyltransferase from Candida glabrata (strain ATCC 2001 / BCRC 20586 / JCM 3761 / NBRC 0622 / NRRL Y-65 / CBS 138) (Yeast).